A 678-amino-acid polypeptide reads, in one-letter code: MGDSHVDTGATSTEAVAEEVSLFSMTDMILLSVLVGFLTYFFLFRKKKEEIPEFTKISTTTSSVKESSFVEKMKKTGRNIIVFYGSQTGTAEEFANRLSKDAHRYGMRGMAADPEEYDLADLSSLPEIDNSLAVFCMATYGEGDPTDNAQDFYDWLQETDLDLSGVKYAVFGLGNKTYEHFNSMGKYVDQRLEQLGAQRIFELGLGDDDGNLEEDFITWREQFWPAVCEFFGVEATGEESSIRQYELVLHADTDPAKVYTGEMGRLKSYENQKPPFDAKNPFLAAVTTNRKLNQGTERHLMHLELDISDSKIRYESGDHVAVYPANDSNLVNQLGKILGADLDVVMSLKNLDEESNKKHPFPCPTTYRTALTYYLDITNPPRTNVLYELAQYASEPSEQEQLHKMASSSGEGKELYLTWVVEARRHILAILQDYPSLRPPIDHLCELLPRLQARYYSIASSSKVHPNSVHICAVVVEYETKSGRINKGVATSWLQAKDPAGENGRRALVPMFVRKSQFRLPFKSTTPVIMVGPGTGVAPFIGFIQERAWLQQQGKEVGETLLYYGCRRSDEDYLYREELAQFHKDGTLTQLNVAFSREQAQKVYVQHLLKRDQEHLWKLIHEDGAHIYVCGDARNMARDVQNTFCNIAAELGGMEHTQAVDYVKKLMTKGRYSLDVWS.

G2 is subject to N-acetylglycine. Topologically, residues 2 to 21 (GDSHVDTGATSTEAVAEEVS) are lumenal. The helical transmembrane segment at 22-42 (LFSMTDMILLSVLVGFLTYFF) threads the bilayer. Residues 43-678 (LFRKKKEEIP…KGRYSLDVWS (636 aa)) are Cytoplasmic-facing. S63 is subject to Phosphoserine. The region spanning 80–224 (IIVFYGSQTG…DFITWREQFW (145 aa)) is the Flavodoxin-like domain. FMN-binding positions include 86–91 (SQTGTA), 138–141 (ATYG), 173–182 (LGNKTYEHFN), and D208. Residues 279–521 (KNPFLAAVTT…FVRKSQFRLP (243 aa)) form the FAD-binding FR-type domain. Residue R298 participates in NADP(+) binding. FAD contacts are provided by residues R424, 454–457 (RYYS), 472–474 (CAV), Y478, and 488–491 (GVAT). NADP(+) contacts are provided by residues T535, 596–597 (SR), 602–606 (KVYVQ), and D639. FAD is bound at residue W677.

Belongs to the NADPH--cytochrome P450 reductase family. This sequence in the N-terminal section; belongs to the flavodoxin family. The protein in the C-terminal section; belongs to the flavoprotein pyridine nucleotide cytochrome reductase family. The cofactor is FAD. FMN is required as a cofactor.

The protein localises to the endoplasmic reticulum membrane. The enzyme catalyses 2 oxidized [cytochrome P450] + NADPH = 2 reduced [cytochrome P450] + NADP(+) + H(+). Its function is as follows. This enzyme is required for electron transfer from NADP to cytochrome P450 in microsomes. It can also provide electron transfer to heme oxygenase and cytochrome B5. This is NADPH--cytochrome P450 reductase from Cavia porcellus (Guinea pig).